Consider the following 368-residue polypeptide: WD repeat-containing protein wdr-5.1 (368 aa).

The segment at 1–64 is disordered; that stretch reads MDPAQNQPNT…APTTSQESTI (64 aa). The segment covering 16-42 has biased composition (low complexity); it reads PAVEEAQGVNNSEAEAPAPAALSSVSP. WD repeat units lie at residues 77-116, 119-158, 161-200, 203-242, 246-285, 288-330, and 333-368; these read GHTK…CERT, GHKL…MAKT, GHTN…CVKT, AHSD…CVKT, DENP…TLKQ, GHEN…VVQS, and GHTQ…RSDS.

This chain is WD repeat-containing protein wdr-5.1, found in Caenorhabditis briggsae.